Reading from the N-terminus, the 340-residue chain is UDP-3-O-acylglucosamine N-acyltransferase (340 aa).

The active-site Proton acceptor is the His-238.

The protein belongs to the transferase hexapeptide repeat family. LpxD subfamily. Homotrimer.

It catalyses the reaction a UDP-3-O-[(3R)-3-hydroxyacyl]-alpha-D-glucosamine + a (3R)-hydroxyacyl-[ACP] = a UDP-2-N,3-O-bis[(3R)-3-hydroxyacyl]-alpha-D-glucosamine + holo-[ACP] + H(+). Its pathway is bacterial outer membrane biogenesis; LPS lipid A biosynthesis. Functionally, catalyzes the N-acylation of UDP-3-O-acylglucosamine using 3-hydroxyacyl-ACP as the acyl donor. Is involved in the biosynthesis of lipid A, a phosphorylated glycolipid that anchors the lipopolysaccharide to the outer membrane of the cell. The chain is UDP-3-O-acylglucosamine N-acyltransferase from Psychromonas ingrahamii (strain DSM 17664 / CCUG 51855 / 37).